The chain runs to 447 residues: ATP-dependent 6-phosphofructokinase (447 aa).

Residues Gly-88, 154–155 (RG), and 179–182 (GDGT) contribute to the ATP site. Residue Asp-180 participates in Mg(2+) binding. Residues 208 to 210 (TVD), 253 to 255 (MGR), Glu-315, and 368 to 371 (YIIR) each bind substrate. Asp-210 serves as the catalytic Proton acceptor.

It belongs to the phosphofructokinase type A (PFKA) family. PPi-dependent PFK group II subfamily. Atypical ATP-dependent clade 'X' sub-subfamily. As to quaternary structure, homodimer. It depends on Mg(2+) as a cofactor.

The protein localises to the cytoplasm. The catalysed reaction is beta-D-fructose 6-phosphate + ATP = beta-D-fructose 1,6-bisphosphate + ADP + H(+). The protein operates within carbohydrate degradation; glycolysis; D-glyceraldehyde 3-phosphate and glycerone phosphate from D-glucose: step 3/4. In terms of biological role, catalyzes the phosphorylation of D-fructose 6-phosphate to fructose 1,6-bisphosphate by ATP, the first committing step of glycolysis. The polypeptide is ATP-dependent 6-phosphofructokinase (Borreliella burgdorferi (strain ATCC 35210 / DSM 4680 / CIP 102532 / B31) (Borrelia burgdorferi)).